The sequence spans 406 residues: Peptidase T (406 aa).

Position 78 (His-78) interacts with Zn(2+). The active site involves Asp-80. Asp-139 is a binding site for Zn(2+). Glu-173 functions as the Proton acceptor in the catalytic mechanism. Residues Glu-174, Asp-196, and His-378 each contribute to the Zn(2+) site.

The protein belongs to the peptidase M20B family. The cofactor is Zn(2+).

Its subcellular location is the cytoplasm. The catalysed reaction is Release of the N-terminal residue from a tripeptide.. Its function is as follows. Cleaves the N-terminal amino acid of tripeptides. The protein is Peptidase T of Clostridium perfringens (strain 13 / Type A).